The primary structure comprises 317 residues: Olfactory receptor 2F2 (317 aa).

Topologically, residues Met-1–Ile-25 are extracellular. Asn-5 carries an N-linked (GlcNAc...) asparagine glycan. The helical transmembrane segment at Ser-26–Ile-49 threads the bilayer. The Cytoplasmic segment spans residues Arg-50–Thr-57. The chain crosses the membrane as a helical span at residues Pro-58–Pro-79. The Extracellular segment spans residues Gln-80–Gln-100. Cysteines 97 and 189 form a disulfide. A helical membrane pass occupies residues Leu-101–Tyr-120. Topologically, residues Asp-121–Gly-139 are cytoplasmic. Residues Leu-140–Val-158 form a helical membrane-spanning segment. The Extracellular portion of the chain corresponds to Gln-159–Asn-195. A helical membrane pass occupies residues Glu-196 to Ile-219. Over Arg-220–Lys-236 the chain is Cytoplasmic. Residues Ala-237–Tyr-259 traverse the membrane as a helical segment. The Extracellular segment spans residues Ile-260–Lys-272. A helical membrane pass occupies residues Leu-273 to Leu-292. Topologically, residues Arg-293–Thr-317 are cytoplasmic.

It belongs to the G-protein coupled receptor 1 family.

The protein localises to the cell membrane. Its function is as follows. Odorant receptor. The protein is Olfactory receptor 2F2 (OR2F2) of Homo sapiens (Human).